The sequence spans 89 residues: Putative membrane protein insertion efficiency factor (89 aa).

Residues 68–89 (VPPPNSDARNAPHEAEASSHRL) are disordered. Positions 77 to 89 (NAPHEAEASSHRL) are enriched in basic and acidic residues.

This sequence belongs to the UPF0161 family.

Its subcellular location is the cell inner membrane. In terms of biological role, could be involved in insertion of integral membrane proteins into the membrane. This chain is Putative membrane protein insertion efficiency factor, found in Burkholderia mallei (strain SAVP1).